The sequence spans 174 residues: Vimentin-type intermediate filament-associated coiled-coil protein (174 aa).

Residues 7–97 (LQIREANAHL…DQRDQMIQQL (91 aa)) adopt a coiled-coil conformation. Positions 128-174 (GPLPASHSHRAQLLPDGPGPPLGNNMGKEEGQDDQDDQQPAVFGTTV) are disordered.

The protein resides in the cytoplasm. In Mus musculus (Mouse), this protein is Vimentin-type intermediate filament-associated coiled-coil protein (Vmac).